We begin with the raw amino-acid sequence, 135 residues long: T-cell receptor gamma chain V region 5/10-13 (135 aa).

Residues 1–18 (MLLLRWPTFCCLWVFGLG) form the signal peptide. Positions 19–114 (QLEQTELSVT…DEATYYCAVC (96 aa)) are v segment. The interval 115–135 (RSGTSWVKIFAKGTKLVVIPP) is j segment.

This chain is T-cell receptor gamma chain V region 5/10-13 (Tcrg-V1), found in Mus musculus (Mouse).